Here is a 155-residue protein sequence, read N- to C-terminus: MYFKKKYIGLIDKNCEKKILDDCTTIKICYILIGILIGTNMITLIYNFIFWDHYMTCNKKDKMFYCPKDWVGYNNVCYYFNNDSKNYTTATNSCKQLNSTLANNDTNLLNLTKVYHHDKLYWVNYSLNDNFSLSLRNSTYEKRSKYLPLLFICSK.

Over 1 to 30 (MYFKKKYIGLIDKNCEKKILDDCTTIKICY) the chain is Cytoplasmic. A helical transmembrane segment spans residues 31 to 51 (ILIGILIGTNMITLIYNFIFW). Residues 52–155 (DHYMTCNKKD…YLPLLFICSK (104 aa)) are Extracellular-facing. A disulfide bridge links Cys66 with Cys77. Residues 66–154 (CPKDWVGYNN…KYLPLLFICS (89 aa)) are lectin-like. N-linked (GlcNAc...) asparagine; by host glycans are attached at residues Asn82, Asn86, Asn98, Asn104, Asn110, Asn124, Asn130, and Asn137. The cysteines at positions 94 and 153 are disulfide-linked.

Belongs to the asfivirus lectin-like protein family. Homodimer.

It localises to the host endoplasmic reticulum membrane. Functionally, down-regulates MHC-I expression by impairing the appropriate configuration or presentation into the plasma membrane of the latter. Participates in viral hemadsorption, which may help viral spread. Reduces the transactivating activity of host TP53, thus inhibiting apoptosis. Non-essential for virus growth in swine macrophage cell cultures. The polypeptide is Lectin-like protein EP153R (Ornithodoros (relapsing fever ticks)).